We begin with the raw amino-acid sequence, 617 residues long: Dihydroxy-acid dehydratase (617 aa).

D81 is a binding site for Mg(2+). C122 is a [2Fe-2S] cluster binding site. Mg(2+) contacts are provided by D123 and K124. K124 is subject to N6-carboxylysine. C197 contacts [2Fe-2S] cluster. E494 lines the Mg(2+) pocket. Residue S520 is the Proton acceptor of the active site.

It belongs to the IlvD/Edd family. Homodimer. [2Fe-2S] cluster serves as cofactor. Requires Mg(2+) as cofactor.

The enzyme catalyses (2R)-2,3-dihydroxy-3-methylbutanoate = 3-methyl-2-oxobutanoate + H2O. The catalysed reaction is (2R,3R)-2,3-dihydroxy-3-methylpentanoate = (S)-3-methyl-2-oxopentanoate + H2O. The protein operates within amino-acid biosynthesis; L-isoleucine biosynthesis; L-isoleucine from 2-oxobutanoate: step 3/4. Its pathway is amino-acid biosynthesis; L-valine biosynthesis; L-valine from pyruvate: step 3/4. Functionally, functions in the biosynthesis of branched-chain amino acids. Catalyzes the dehydration of (2R,3R)-2,3-dihydroxy-3-methylpentanoate (2,3-dihydroxy-3-methylvalerate) into 2-oxo-3-methylpentanoate (2-oxo-3-methylvalerate) and of (2R)-2,3-dihydroxy-3-methylbutanoate (2,3-dihydroxyisovalerate) into 2-oxo-3-methylbutanoate (2-oxoisovalerate), the penultimate precursor to L-isoleucine and L-valine, respectively. The chain is Dihydroxy-acid dehydratase from Frankia casuarinae (strain DSM 45818 / CECT 9043 / HFP020203 / CcI3).